We begin with the raw amino-acid sequence, 393 residues long: Pre-mRNA-splicing regulator WTAP (393 aa).

The disordered stretch occupies residues 242–393 (QIQISGNRTP…SSVNVQGSVL (152 aa)). Residues 254–267 (EPKDEGETSGKDCG) are compositionally biased toward basic and acidic residues. 2 stretches are compositionally biased toward polar residues: residues 272–286 (GPSNGGSSLQRTHSS) and 321–353 (DGSSYINPLSTGYESVDSPTGSENSLTHQSNDT). Residues 354–365 (DSNHDSQEEKPV) are compositionally biased toward basic and acidic residues. Polar residues predominate over residues 369 to 393 (GNRTVSSRHLQNGLDSSVNVQGSVL).

Belongs to the fl(2)d family. As to quaternary structure, component of the WMM complex, a N6-methyltransferase complex composed of a catalytic subcomplex, named MAC, and of an associated subcomplex, named MACOM. Component of the MACOM subcomplex.

The protein localises to the nucleus speckle. It localises to the nucleus. Its subcellular location is the nucleoplasm. In terms of biological role, associated component of the WMM complex, a complex that mediates N6-methyladenosine (m6A) methylation of RNAs, a modification that plays a role in the efficiency of mRNA splicing and RNA processing. This is Pre-mRNA-splicing regulator WTAP from Xenopus laevis (African clawed frog).